Here is a 384-residue protein sequence, read N- to C-terminus: Probable intron-encoded endonuclease Cox1-I1b (384 aa).

It belongs to the LAGLIDADG endonuclease family.

The protein resides in the mitochondrion. Its function is as follows. Probable mitochondrial DNA endonuclease involved in intron homing. This Schizosaccharomyces pombe (strain 972 / ATCC 24843) (Fission yeast) protein is Probable intron-encoded endonuclease Cox1-I1b (cox1-I1b).